The sequence spans 315 residues: tRNA dimethylallyltransferase (315 aa).

13–20 (GPTASGKT) contacts ATP. 15-20 (TASGKT) contacts substrate. 4 interaction with substrate tRNA regions span residues 38 to 41 (DSAL), 162 to 166 (QRLSR), 243 to 248 (RCVGYR), and 276 to 283 (KRQITWLR).

Belongs to the IPP transferase family. As to quaternary structure, monomer. Mg(2+) serves as cofactor.

It carries out the reaction adenosine(37) in tRNA + dimethylallyl diphosphate = N(6)-dimethylallyladenosine(37) in tRNA + diphosphate. Functionally, catalyzes the transfer of a dimethylallyl group onto the adenine at position 37 in tRNAs that read codons beginning with uridine, leading to the formation of N6-(dimethylallyl)adenosine (i(6)A). The sequence is that of tRNA dimethylallyltransferase from Vibrio vulnificus (strain CMCP6).